Reading from the N-terminus, the 232-residue chain is 2,3-bisphosphoglycerate-dependent phosphoglycerate mutase 1 (232 aa).

Substrate-binding positions include Arg8–Asn15, Thr21–Gly22, Arg58, Glu114–Tyr117, Lys125, Arg141–Arg142, and Gly185–Asn186. The active-site Tele-phosphohistidine intermediate is His9. Glu114 acts as the Proton donor/acceptor in catalysis.

It belongs to the phosphoglycerate mutase family. BPG-dependent PGAM subfamily.

The enzyme catalyses (2R)-2-phosphoglycerate = (2R)-3-phosphoglycerate. Its pathway is carbohydrate degradation; glycolysis; pyruvate from D-glyceraldehyde 3-phosphate: step 3/5. Catalyzes the interconversion of 2-phosphoglycerate and 3-phosphoglycerate. This is 2,3-bisphosphoglycerate-dependent phosphoglycerate mutase 1 from Gloeobacter violaceus (strain ATCC 29082 / PCC 7421).